Reading from the N-terminus, the 106-residue chain is DTATCGKVFYSASAVSAASNAACNYVRAGSTAGGSTYPHVYNNYEGFRFKGLSKPFYEFPILSSGKTYTGGSPGADRVVINGQCSIAGIITHTGASGNAFVACGGT.

2 cysteine pairs are disulfide-bonded: Cys-5-Cys-103 and Cys-23-Cys-84. The active site involves His-39. Catalysis depends on Glu-58, which acts as the Proton acceptor. Catalysis depends on His-92, which acts as the Proton donor.

It belongs to the ribonuclease N1/T1 family.

It carries out the reaction [RNA] containing guanosine + H2O = an [RNA fragment]-3'-guanosine-3'-phosphate + a 5'-hydroxy-ribonucleotide-3'-[RNA fragment].. The sequence is that of Guanyl-specific ribonuclease Th1 from Trichoderma harzianum (Hypocrea lixii).